We begin with the raw amino-acid sequence, 188 residues long: MTETHTTEVRGDSGRAVAERVASRVLDVPDFPKPGVMFKDLMPLFADGDTFREVIDGIVRHYGRDSFDAVVGIEARGFVVAAAIAYAAGVGVVPVRKAGKLPRVAYSASYALEYGEATLEVHQDAFTAGHRVLVVDDVLATGGTAQATLDLVERAGGTVAGFTVLLELGFLGGRERLAPRAVHALLTV.

This sequence belongs to the purine/pyrimidine phosphoribosyltransferase family. As to quaternary structure, homodimer.

It localises to the cytoplasm. It carries out the reaction AMP + diphosphate = 5-phospho-alpha-D-ribose 1-diphosphate + adenine. The protein operates within purine metabolism; AMP biosynthesis via salvage pathway; AMP from adenine: step 1/1. Functionally, catalyzes a salvage reaction resulting in the formation of AMP, that is energically less costly than de novo synthesis. In Salinispora arenicola (strain CNS-205), this protein is Adenine phosphoribosyltransferase.